Here is a 346-residue protein sequence, read N- to C-terminus: MTEDQLLGPRAHGEPCGSAVLKAVAEDFQVEEVLDIPLSGEGEHLWLWVEKRNLNTEEAAKRIARAAGVPLKLISYAGLKDRQALTRQWFSLHLPGKADPDLAAAEDDSLRLLQRVRHQRKLQRGAHSANGFRLRLTDLHADHAQLDARLERIRAQGVPNYFGLQRFGYEGGNLLGARDFAARAELPVQRNLRSRLLSAGRSYLFNRVLAQRVADGSWAEARVGDLLAFTDSRSFFPAAEAECSDPRLAILDLHPTGPLWGEGGSPAGAEIQALEDAVAASEEPIANWLAQAGMKHERRILRLPIGGLSWHYPGPDILQLEFVLPTGCFATAMVRELVSLAGQTDI.

Catalysis depends on aspartate 81, which acts as the Nucleophile. Residues 157-303 (GVPNYFGLQR…MKHERRILRL (147 aa)) enclose the TRUD domain.

Belongs to the pseudouridine synthase TruD family.

The enzyme catalyses uridine(13) in tRNA = pseudouridine(13) in tRNA. Responsible for synthesis of pseudouridine from uracil-13 in transfer RNAs. This Stutzerimonas stutzeri (strain A1501) (Pseudomonas stutzeri) protein is tRNA pseudouridine synthase D.